Consider the following 687-residue polypeptide: Phage-like element PBSX protein XkdV (687 aa).

The protein to B.subtilis YqcC.

This Bacillus subtilis (strain 168) protein is Phage-like element PBSX protein XkdV (xkdV).